A 260-amino-acid polypeptide reads, in one-letter code: Carbonic anhydrase 3 (260 aa).

Ala-2 carries the N-acetylalanine modification. The region spanning 3-259 is the Alpha-carbonic anhydrase domain; sequence KEWGYASHNG…INNRVVRASF (257 aa). Residues Ser-29, Ser-43, Ser-48, Ser-50, and Ser-55 each carry the phosphoserine modification. Residues 64-67 are involved in proton transfer; the sequence is KTCR. Phosphothreonine is present on Thr-73. His-94, His-96, and His-119 together coordinate Zn(2+). The residue at position 127 (Tyr-127) is a Phosphotyrosine. Phosphothreonine occurs at positions 129 and 176. Residues Cys-182 and Cys-187 each carry the S-glutathionyl cysteine modification. Residue 198-199 participates in substrate binding; that stretch reads TT. Thr-216 is modified (phosphothreonine). The residue at position 219 (Ser-219) is a Phosphoserine.

This sequence belongs to the alpha-carbonic anhydrase family. Requires Zn(2+) as cofactor. Post-translationally, S-thiolated both by thiol-disulfide exchange with glutathione disulfide and by oxyradical-initiated S-thiolation with reduced glutathione. S-glutathionylated in hepatocytes under oxidative stress. As to expression, muscle specific.

It is found in the cytoplasm. It carries out the reaction hydrogencarbonate + H(+) = CO2 + H2O. With respect to regulation, activated by proton donors such as imidazole and the dipeptide histidylhistidine. Inhibited by coumarins and sulfonamide derivatives such as acetazolamide. Reversible hydration of carbon dioxide. This chain is Carbonic anhydrase 3, found in Homo sapiens (Human).